We begin with the raw amino-acid sequence, 802 residues long: Chondroitin sulfate synthase 1 (802 aa).

The Cytoplasmic portion of the chain corresponds to 1-7 (MAARGRR). Residues 8-28 (AWLSVLLGLVLGFVLASRLVL) traverse the membrane as a helical; Signal-anchor for type II membrane protein segment. Topologically, residues 29–802 (PRASELKRAG…SNNNGSVRTA (774 aa)) are lumenal. A disordered region spans residues 34–82 (LKRAGPRRRASPEGCRSGQAAASQAGGARGDARGAQLWPPGSDPDGGPR). Low complexity-rich tracts occupy residues 49–59 (RSGQAAASQAG) and 66–78 (RGAQLWPPGSDPD). N-linked (GlcNAc...) asparagine glycosylation is found at asparagine 189 and asparagine 623. A divalent metal cation contacts are provided by aspartate 633 and histidine 747. An N-linked (GlcNAc...) asparagine glycan is attached at asparagine 796.

Belongs to the chondroitin N-acetylgalactosaminyltransferase family. The cofactor is Co(2+). Requires Mn(2+) as cofactor. Cd(2+) is required as a cofactor. In terms of tissue distribution, ubiquitous, with the highest levels in placenta. Detected at low levels in brain, heart, skeletal muscle, colon, thymus, spleen, kidney, liver, adrenal gland, mammary gland, stomach, small intestine, lung and peripheral blood leukocytes.

The protein localises to the golgi apparatus. The protein resides in the golgi stack membrane. It localises to the secreted. It catalyses the reaction 3-O-(beta-D-GlcA-(1-&gt;3)-beta-D-GalNAc-(1-&gt;4)-beta-D-GlcA-(1-&gt;3)-beta-D-Gal-(1-&gt;3)-beta-D-Gal-(1-&gt;4)-beta-D-Xyl)-L-seryl-[protein] + UDP-N-acetyl-alpha-D-galactosamine = 3-O-(beta-D-GalNAc-(1-&gt;4)-beta-D-GlcA-(1-&gt;3)-beta-D-GalNAc-(1-&gt;4)-beta-D-GlcA-(1-&gt;3)-beta-D-Gal-(1-&gt;3)-beta-D-Gal-(1-&gt;4)-beta-D-Xyl)-L-seryl-[protein] + UDP + H(+). It carries out the reaction 3-O-{beta-D-GlcA-(1-&gt;3)-[beta-D-GalNAc-(1-&gt;4)-beta-D-GlcA-(1-&gt;3)](n)-beta-D-GalNAc-(1-&gt;4)-beta-D-GlcA-(1-&gt;3)-beta-D-Gal-(1-&gt;3)-beta-D-Gal-(1-&gt;4)-beta-D-Xyl}-L-seryl-[protein] + UDP-N-acetyl-alpha-D-galactosamine = 3-O-{[beta-D-GalNAc-(1-&gt;4)-beta-D-GlcA-(1-&gt;3)](n+1)-beta-D-GalNAc-(1-&gt;4)-beta-D-GlcA-(1-&gt;3)-beta-D-Gal-(1-&gt;3)-beta-D-Gal-(1-&gt;4)-beta-D-Xyl}-L-seryl-[protein] + UDP + H(+). The catalysed reaction is 3-O-(beta-D-GalNAc-(1-&gt;4)-beta-D-GlcA-(1-&gt;3)-beta-D-Gal-(1-&gt;3)-beta-D-Gal-(1-&gt;4)-beta-D-Xyl)-L-seryl-[protein] + UDP-alpha-D-glucuronate = 3-O-(beta-D-GlcA-(1-&gt;3)-beta-D-GalNAc-(1-&gt;4)-beta-D-GlcA-(1-&gt;3)-beta-D-Gal-(1-&gt;3)-beta-D-Gal-(1-&gt;4)-beta-D-Xyl)-L-seryl-[protein] + UDP + H(+). The enzyme catalyses 3-O-{[beta-D-GalNAc-(1-&gt;4)-beta-D-GlcA-(1-&gt;3)](n)-beta-D-GalNAc-(1-&gt;4)-beta-D-GlcA-(1-&gt;3)-beta-D-Gal-(1-&gt;3)-beta-D-Gal-(1-&gt;4)-beta-D-Xyl}-L-seryl-[protein] + UDP-alpha-D-glucuronate = 3-O-{beta-D-GlcA-(1-&gt;3)-[beta-D-GalNAc-(1-&gt;4)-beta-D-GlcA-(1-&gt;3)](n)-beta-D-GalNAc-(1-&gt;4)-beta-D-GlcA-(1-&gt;3)-beta-D-Gal-(1-&gt;3)-beta-D-Gal-(1-&gt;4)-beta-D-Xyl}-L-seryl-[protein] + UDP + H(+). In terms of biological role, has both beta-1,3-glucuronic acid and beta-1,4-N-acetylgalactosamine transferase activity. Transfers glucuronic acid (GlcUA) from UDP-GlcUA and N-acetylgalactosamine (GalNAc) from UDP-GalNAc to the non-reducing end of the elongating chondroitin polymer. Involved in the negative control of osteogenesis likely through the modulation of NOTCH signaling. This Homo sapiens (Human) protein is Chondroitin sulfate synthase 1.